Consider the following 171-residue polypeptide: Protein ups1 homolog (171 aa).

A required for mitochondrial targeting region spans residues M1–E79. The PRELI/MSF1 domain occupies T2–S171.

It is found in the mitochondrion inner membrane. It localises to the mitochondrion intermembrane space. Its function is as follows. Required for maintenance of normal mitochondrial morphology as well as PCP1-dependent processing of MGM1. This chain is Protein ups1 homolog, found in Schizosaccharomyces pombe (strain 972 / ATCC 24843) (Fission yeast).